We begin with the raw amino-acid sequence, 534 residues long: Calcium-dependent protein kinase 18 (534 aa).

The interval 1–49 (MGLCFSSPKATRRGTGSRNPNPDSPTQGKASEKVSNKNKKNTKKIQLRH) is disordered. The N-myristoyl glycine moiety is linked to residue Gly-2. Polar residues predominate over residues 14–29 (GTGSRNPNPDSPTQGK). A compositionally biased stretch (basic residues) spans 36-47 (NKNKKNTKKIQL). In terms of domain architecture, Protein kinase spans 71 to 331 (YTIGKLLGHG…AAQALSHSWV (261 aa)). ATP contacts are provided by residues 77–85 (LGHGQFGFT) and Lys-100. Asp-197 acts as the Proton acceptor in catalysis. Ser-237 bears the Phosphoserine mark. An autoinhibitory domain region spans residues 337–367 (ASEVPIDISVLNNMRQFVKFSRLKQIALRAL). EF-hand domains lie at 374–409 (DELD…DVPW), 411–446 (LKDA…VNQL), 453–488 (KWQQ…KGSI), and 491–518 (LLEE…ASLK). Ca(2+)-binding residues include Asp-387, Asp-389, Asn-391, Ser-393, Glu-398, Asp-424, Asn-426, Asp-428, Glu-435, Asp-466, Asp-468, Asp-470, Glu-477, Asp-496, Asp-498, Asp-500, and Arg-502. Ser-504 is subject to Phosphoserine. Glu-507 contacts Ca(2+).

Belongs to the protein kinase superfamily. Ser/Thr protein kinase family. CDPK subfamily.

It localises to the membrane. The catalysed reaction is L-seryl-[protein] + ATP = O-phospho-L-seryl-[protein] + ADP + H(+). It catalyses the reaction L-threonyl-[protein] + ATP = O-phospho-L-threonyl-[protein] + ADP + H(+). Its activity is regulated as follows. Activated by calcium. Autophosphorylation may play an important role in the regulation of the kinase activity. In terms of biological role, may play a role in signal transduction pathways that involve calcium as a second messenger. The polypeptide is Calcium-dependent protein kinase 18 (CPK18) (Arabidopsis thaliana (Mouse-ear cress)).